Reading from the N-terminus, the 238-residue chain is End-binding protein 1 (238 aa).

In terms of domain architecture, Calponin-homology (CH) spans 15-117 (FVGRVSLLKW…FFQWFKWFFD (103 aa)). An interaction with aurora kinase region spans residues 101 to 238 (KYMDNFEFFQ…EDILYAEYHQ (138 aa)). The span at 124–165 (KSGATESGSANAVTKTSKPGNRSGSTAASMQNPKASSTSGPS) shows a compositional bias: polar residues. Positions 124–169 (KSGATESGSANAVTKTSKPGNRSGSTAASMQNPKASSTSGPSIDSK) are disordered. Residue serine 148 is modified to Phosphoserine. In terms of domain architecture, EB1 C-terminal spans 156–238 (PKASSTSGPS…EDILYAEYHQ (83 aa)).

This sequence belongs to the MAPRE family. Homodimer; disulfide-linked and via interaction of the C-terminal EB1-specific domains. Interacts with BOP1 (via C-terminal WD repeats). Interacts with giardin subunit gamma, neurogenic locus notch homolog protein, GL50803_8358 and GL50803_11327. Interacts (via C-terminal residues 101-238) with aurora kinase. Interacts with tubulin gamma chain. In terms of processing, phosphorylated in vitro by aurora kinase. Phosphorylation is important for cell division.

It localises to the nucleus membrane. The protein localises to the cytoplasm. Its subcellular location is the cytoskeleton. The protein resides in the spindle. It is found in the nucleus envelope. It localises to the flagellum axoneme. The protein localises to the cell projection. Its subcellular location is the cilium. The protein resides in the flagellum. Its function is as follows. Involved in cell division. Involved in mitosis. Regulates dynamics of microtubules (MTs) during mitosis. Required for cytokinesis. Binds polymerized MTs in vitro. Is able to rescue a mitotic division defect, the proper positioning of the nucleus, of the S.cerevisiae BIM1 knockout mutant in a complementation assay. May play a role in spindle positioning and MT distribution. May be involved in MT nucleation for the formation of median bodies and in the biogenesis of flagella. Based on its localization to both the flagellar exit point and the distal flagellar tips, it may mediate the transition from anterograde to retrograde intraflagellar transport (IFT). The chain is End-binding protein 1 from Giardia intestinalis (strain ATCC 50803 / WB clone C6) (Giardia lamblia).